The sequence spans 309 residues: tRNA dimethylallyltransferase (309 aa).

11–18 provides a ligand contact to ATP; it reads GPTASGKS. Residue 13-18 participates in substrate binding; sequence TASGKS. Interaction with substrate tRNA stretches follow at residues 36-39 and 160-164; these read DSMQ and QRLLR.

This sequence belongs to the IPP transferase family. In terms of assembly, monomer. It depends on Mg(2+) as a cofactor.

It catalyses the reaction adenosine(37) in tRNA + dimethylallyl diphosphate = N(6)-dimethylallyladenosine(37) in tRNA + diphosphate. In terms of biological role, catalyzes the transfer of a dimethylallyl group onto the adenine at position 37 in tRNAs that read codons beginning with uridine, leading to the formation of N6-(dimethylallyl)adenosine (i(6)A). This chain is tRNA dimethylallyltransferase, found in Caulobacter sp. (strain K31).